The sequence spans 181 residues: Adenylate kinase (181 aa).

10–15 contacts ATP; sequence GAGKGT. Positions 30-59 are NMP; the sequence is STGDLFRANISQQTPLGREAQKYMDAGDLV. AMP-binding positions include T31, R36, 57 to 59, 85 to 88, and Q92; these read DLV and GYPR. The interval 126–132 is LID; that stretch reads ARGRNDD. ATP is bound at residue R127. AMP-binding residues include R129 and R140. G166 lines the ATP pocket.

The protein belongs to the adenylate kinase family. As to quaternary structure, monomer.

It localises to the cytoplasm. The enzyme catalyses AMP + ATP = 2 ADP. It participates in purine metabolism; AMP biosynthesis via salvage pathway; AMP from ADP: step 1/1. Functionally, catalyzes the reversible transfer of the terminal phosphate group between ATP and AMP. Plays an important role in cellular energy homeostasis and in adenine nucleotide metabolism. The sequence is that of Adenylate kinase from Nocardia farcinica (strain IFM 10152).